We begin with the raw amino-acid sequence, 387 residues long: Acyl-[acyl-carrier-protein] 6-desaturase (387 aa).

A chloroplast-targeting transit peptide spans 1–29; sequence MALVFKSIGAHKTPPCTLNLASPALYHTR. Positions 131, 169, 172, 222, 255, and 258 each coordinate Fe cation.

It belongs to the fatty acid desaturase type 2 family. The cofactor is Fe(2+).

Its subcellular location is the plastid. It localises to the chloroplast. The enzyme catalyses hexadecanoyl-[ACP] + 2 reduced [2Fe-2S]-[ferredoxin] + O2 + 2 H(+) = (6Z)-hexadecenoyl-[ACP] + 2 oxidized [2Fe-2S]-[ferredoxin] + 2 H2O. Its pathway is lipid metabolism; fatty acid metabolism. Inhibited by KCN or H(2)O(2). Functionally, delta(6) fatty acid desaturase introducing a cis double bond at carbon 6 of palmitoyl-[acyl-carrier protein](16:0-ACP), producing 16:1(6Z)-ACP. No activity with the coenzyme A ester of the fatty acid. The position of the double bond is determined by its distance from the carboxyl end of the fatty acid. Low activity with several saturated acyl-[acyl-carrier protein]s, including 14:0-ACP and 18:0-ACP. Requires reduced ferredoxin for detectable in vitro activity. The sequence is that of Acyl-[acyl-carrier-protein] 6-desaturase from Thunbergia alata (Black-eyed Susan vine).